Reading from the N-terminus, the 55-residue chain is Male-specific sperm protein Mst84Dc (55 aa).

This sequence belongs to the MST(3)CGP family. As to expression, testis.

The protein is Male-specific sperm protein Mst84Dc (Mst84Dc) of Drosophila melanogaster (Fruit fly).